A 1721-amino-acid chain; its full sequence is Latent-transforming growth factor beta-binding protein 1 (1721 aa).

The first 23 residues, methionine 1 to glycine 23, serve as a signal peptide directing secretion. A compositionally biased stretch (low complexity) spans arginine 64–serine 81. The disordered stretch occupies residues arginine 64–histidine 158. The segment covering arginine 99–proline 111 has biased composition (pro residues). Positions alanine 112–proline 130 are enriched in low complexity. An EGF-like 1 domain is found at threonine 187–glutamate 219. 3 disulfide bridges follow: cysteine 191–cysteine 201, cysteine 195–cysteine 207, and cysteine 209–cysteine 218. The tract at residues serine 228–threonine 259 is disordered. N-linked (GlcNAc...) asparagine glycans are attached at residues asparagine 347 and asparagine 378. The EGF-like 2 domain maps to arginine 399–glutamine 431. 6 cysteine pairs are disulfide-bonded: cysteine 403/cysteine 413, cysteine 407/cysteine 419, cysteine 421/cysteine 430, cysteine 559/cysteine 581, cysteine 568/cysteine 594, and cysteine 582/cysteine 597. Asparagine 424 is a glycosylation site (N-linked (GlcNAc...) asparagine). Residues glycine 557–methionine 609 form the TB 1 domain. Asparagine 620 carries an N-linked (GlcNAc...) asparagine glycan. One can recognise an EGF-like 3; calcium-binding domain in the interval aspartate 626–serine 663. 7 cysteine pairs are disulfide-bonded: cysteine 630-cysteine 641, cysteine 636-cysteine 650, cysteine 652-cysteine 665, cysteine 679-cysteine 702, cysteine 689-cysteine 714, cysteine 703-cysteine 717, and cysteine 704-cysteine 729. Serine 647 is a glycosylation site (O-linked (Glc) serine). Residues glycine 677–cysteine 729 form the TB 2 domain. The segment at valine 750–leucine 811 is disordered. O-linked (GalNAc...) threonine glycosylation is found at threonine 769 and threonine 801. Residues glutamate 873 to glutamine 910 enclose the EGF-like 4; calcium-binding domain. Intrachain disulfides connect cysteine 877-cysteine 889, cysteine 884-cysteine 898, cysteine 900-cysteine 913, cysteine 919-cysteine 931, cysteine 926-cysteine 940, cysteine 942-cysteine 955, cysteine 961-cysteine 972, cysteine 967-cysteine 981, cysteine 984-cysteine 996, cysteine 1002-cysteine 1013, cysteine 1008-cysteine 1022, cysteine 1025-cysteine 1036, cysteine 1042-cysteine 1053, cysteine 1048-cysteine 1062, cysteine 1064-cysteine 1077, cysteine 1083-cysteine 1094, cysteine 1089-cysteine 1103, cysteine 1105-cysteine 1118, cysteine 1124-cysteine 1135, cysteine 1130-cysteine 1144, cysteine 1146-cysteine 1159, cysteine 1165-cysteine 1177, cysteine 1172-cysteine 1186, cysteine 1188-cysteine 1200, cysteine 1206-cysteine 1218, cysteine 1212-cysteine 1227, cysteine 1229-cysteine 1242, cysteine 1248-cysteine 1260, and cysteine 1254-cysteine 1269. In terms of domain architecture, EGF-like 5; calcium-binding spans aspartate 915–isoleucine 956. Serine 937 is a glycosylation site (O-linked (Glc) serine). Residues aspartate 957 to glutamate 997 enclose the EGF-like 6; calcium-binding domain. Asparagine 974 carries the (3R)-3-hydroxyasparagine modification. An EGF-like 7; calcium-binding domain is found at aspartate 998–leucine 1037. A glycan (O-linked (Glc) serine) is linked at serine 1019. An EGF-like 8; calcium-binding domain is found at aspartate 1038–arginine 1078. O-linked (Glc) serine glycosylation occurs at serine 1059. Residues aspartate 1079–glutamate 1119 form the EGF-like 9; calcium-binding domain. Positions aspartate 1120 to glutamate 1160 constitute an EGF-like 10; calcium-binding domain. Asparagine 1137 carries the (3R)-3-hydroxyasparagine modification. Residue serine 1141 is glycosylated (O-linked (Glc) serine). The 41-residue stretch at aspartate 1161–glutamine 1201 folds into the EGF-like 11; calcium-binding domain. The Cell attachment site motif lies at arginine 1174–aspartate 1176. Asparagine 1197 is a glycosylation site (N-linked (GlcNAc...) asparagine). One can recognise an EGF-like 12; calcium-binding domain in the interval aspartate 1202–glutamate 1243. O-linked (Glc) serine glycosylation occurs at serine 1224. One can recognise an EGF-like 13; calcium-binding domain in the interval aspartate 1244–glycine 1281. The N-linked (GlcNAc...) asparagine glycan is linked to asparagine 1250. The region spanning aspartate 1286 to arginine 1328 is the EGF-like 14; calcium-binding domain. Residues glutamate 1344–glycine 1411 form an 8-Cys3 region region. In terms of domain architecture, TB 3 spans lysine 1347–cysteine 1401. 4 cysteine pairs are disulfide-bonded: cysteine 1349-cysteine 1372, cysteine 1359-cysteine 1384, cysteine 1373-cysteine 1389, and cysteine 1374-cysteine 1401. Asparagine 1366 is a glycosylation site (N-linked (GlcNAc...) asparagine). Residue serine 1414 is modified to Phosphoserine; by FAM20C. The EGF-like 15; calcium-binding domain occupies aspartate 1424–phenylalanine 1466. Positions aspartate 1467–glutamate 1503 constitute an EGF-like 16; calcium-binding domain. Disulfide bonds link cysteine 1471–cysteine 1482, cysteine 1477–cysteine 1491, cysteine 1526–cysteine 1550, cysteine 1536–cysteine 1562, cysteine 1551–cysteine 1565, and cysteine 1552–cysteine 1577. An O-linked (Glc) serine glycan is attached at serine 1488. The C-terminal domain stretch occupies residues isoleucine 1507–glutamate 1721. Residues aspartate 1524 to cysteine 1577 enclose the TB 4 domain. Serine 1597 and serine 1616 each carry phosphoserine. The region spanning glutamine 1621–lysine 1657 is the EGF-like 17 domain. Disulfide bonds link cysteine 1625–cysteine 1636, cysteine 1631–cysteine 1645, cysteine 1666–cysteine 1681, cysteine 1676–cysteine 1690, and cysteine 1692–cysteine 1705. The region spanning aspartate 1662–threonine 1706 is the EGF-like 18; calcium-binding domain. The O-linked (Glc) serine glycan is linked to serine 1687.

It belongs to the LTBP family. Interacts with TGFB1; associates via disulfide bonds with the Latency-associated peptide chain (LAP) regulatory chain of TGFB1, leading to regulate activation of TGF-beta-1. LTBP1 does not bind directly to TGF-beta-1, the active chain of TGFB1. Interacts (via C-terminal domain) with FBN1 (via N-terminal domain). Interacts with FBN2. Interacts with ADAMTSL2. Interacts with EFEMP2. Post-translationally, contains hydroxylated asparagine residues. In terms of processing, isoform Short N-terminus is blocked. Two intrachain disulfide bonds from the TB3 domain are rearranged upon TGFB1 binding, and form interchain bonds with TGFB1 propeptide, anchoring it to the extracellular matrix. Post-translationally, O-glycosylated on serine residues by POGLUT2 and POGLUT3. In terms of tissue distribution, expressed in the aorta (at protein level). Isoform Long: Expressed in fibroblasts.

Its subcellular location is the secreted. It localises to the extracellular space. The protein localises to the extracellular matrix. Functionally, key regulator of transforming growth factor beta (TGFB1, TGFB2 and TGFB3) that controls TGF-beta activation by maintaining it in a latent state during storage in extracellular space. Associates specifically via disulfide bonds with the Latency-associated peptide (LAP), which is the regulatory chain of TGF-beta, and regulates integrin-dependent activation of TGF-beta. Outcompeted by LRRC32/GARP for binding to LAP regulatory chain of TGF-beta. The chain is Latent-transforming growth factor beta-binding protein 1 from Homo sapiens (Human).